The primary structure comprises 142 residues: Large ribosomal subunit protein uL13 (142 aa).

It belongs to the universal ribosomal protein uL13 family. In terms of assembly, part of the 50S ribosomal subunit.

This protein is one of the early assembly proteins of the 50S ribosomal subunit, although it is not seen to bind rRNA by itself. It is important during the early stages of 50S assembly. The polypeptide is Large ribosomal subunit protein uL13 (Burkholderia cenocepacia (strain ATCC BAA-245 / DSM 16553 / LMG 16656 / NCTC 13227 / J2315 / CF5610) (Burkholderia cepacia (strain J2315))).